A 416-amino-acid polypeptide reads, in one-letter code: MDQPATPNSFRTGPDEQGMFGIFGGRFVAETLMPLILDLERHWNEVKNDPDFRAELTDLSTHYAGRPSKLYFAEGLTKHLREVSSAKGLGGGAKVYFKREDLNHTGSHKINNCLGQILLAKRMGKKRIIAETGAGQHGVASATVAARFGYPCVVYMGATDVARQSPNVFRMKLLGAEVRPVTAGHGTLKDAMNEALRDWVTNVEDTYYLIGTAAGPHPYPELVRDFQSVIGTEARAQILEQEGRLPDTIIAAVGGGSNAIGLFHPFLDDKDVRIIGIEAGGRGLDGIEHCASMNAGSPGVLHGNRTYLLQNADGQIMDGHSISAGLDYPGVGPEHSWLRDSGRVEYVPILDDEALEAFKLTTRVEGIIPALESAHAIAHAVKIVPAMDKDQIVIVNLSGRGDKDVHTVASMLGMEI.

At lysine 109 the chain carries N6-(pyridoxal phosphate)lysine.

This sequence belongs to the TrpB family. Tetramer of two alpha and two beta chains. Requires pyridoxal 5'-phosphate as cofactor.

It carries out the reaction (1S,2R)-1-C-(indol-3-yl)glycerol 3-phosphate + L-serine = D-glyceraldehyde 3-phosphate + L-tryptophan + H2O. It functions in the pathway amino-acid biosynthesis; L-tryptophan biosynthesis; L-tryptophan from chorismate: step 5/5. Its function is as follows. The beta subunit is responsible for the synthesis of L-tryptophan from indole and L-serine. This chain is Tryptophan synthase beta chain, found in Mesorhizobium japonicum (strain LMG 29417 / CECT 9101 / MAFF 303099) (Mesorhizobium loti (strain MAFF 303099)).